A 499-amino-acid chain; its full sequence is 3-beta-hydroxylase (499 aa).

A helical; Signal-anchor for type II membrane protein membrane pass occupies residues 2–22 (FSSFETLILSFVSLFFMMIFI). Cys441 lines the heme pocket.

This sequence belongs to the cytochrome P450 family. The cofactor is heme.

It localises to the membrane. The enzyme catalyses (+)-costunolide + reduced [NADPH--hemoprotein reductase] + O2 = 3beta-hydroxycostunolide + oxidized [NADPH--hemoprotein reductase] + H2O + H(+). It carries out the reaction parthenolide + reduced [NADPH--hemoprotein reductase] + O2 = 3beta-hydroxyparthenolide + oxidized [NADPH--hemoprotein reductase] + H2O + H(+). It functions in the pathway secondary metabolite biosynthesis; terpenoid biosynthesis. Involved in the biosynthesis of germacrene-derived sesquiterpene lactones. Component of the parthenolide biosynthetic pathway; parthenolide and conjugates are promising anti-cancer drugs highly active against colon cancer cells. Catalyzes the conversion of costunolide and parthenolide to 3-beta-hydroxycostunolide and 3-beta-hydroxyparthenolide, respectively. In Tanacetum parthenium (Feverfew), this protein is 3-beta-hydroxylase.